The chain runs to 778 residues: Aerobic respiration control sensor protein ArcB (778 aa).

Topologically, residues 1–25 are cytoplasmic; the sequence is MKQIRLLAQYYVDLMMKLGLVRFSM. Residues 26–46 traverse the membrane as a helical segment; it reads LLALALVVLAIVVQMAVTMVL. Residues 47-57 lie on the Periplasmic side of the membrane; the sequence is HGQVESIDVIR. A helical transmembrane segment spans residues 58-78; that stretch reads SIFFGLLITPWAVYFLSVVVE. The Cytoplasmic segment spans residues 79–778; sequence QLEESRQRLS…KAWVAKATKK (700 aa). Positions 153-223 constitute a PAS domain; it reads QSSFLRSFLD…ETDEKVFRHN (71 aa). Residues 226–278 form the PAC domain; it reads LTYEQWLDYPDGRKACFEIRKVPYYDRVGKRHGLMGFGRDITERKRYQDALER. Positions 289-507 constitute a Histidine kinase domain; it reads TISHELRTPL…TFTLTIHAPS (219 aa). Histidine 292 carries the phosphohistidine; by autocatalysis modification. Positions 527-643 constitute a Response regulatory domain; the sequence is NVLLVEDIEL…ALTAMIKKFW (117 aa). A 4-aspartylphosphate modification is found at aspartate 576. Residues 678-771 enclose the HPt domain; the sequence is GPKLITDGLA…RHDVEVLKAW (94 aa). Histidine 717 carries the post-translational modification Phosphohistidine.

Activation requires a sequential transfer of a phosphate group from a His in the primary transmitter domain, to an Asp in the receiver domain and to a His in the secondary transmitter domain.

The protein localises to the cell inner membrane. The enzyme catalyses ATP + protein L-histidine = ADP + protein N-phospho-L-histidine.. Member of the two-component regulatory system ArcB/ArcA. Sensor-regulator protein for anaerobic repression of the arc modulon. Activates ArcA via a four-step phosphorelay. ArcB can also dephosphorylate ArcA by a reverse phosphorelay involving His-717 and Asp-576. The polypeptide is Aerobic respiration control sensor protein ArcB (arcB) (Escherichia coli O157:H7).